The primary structure comprises 635 residues: 3-dehydroshikimate dehydratase (635 aa).

Positions 134, 165, 191, and 239 each coordinate a divalent metal cation. VOC domains follow at residues 295–414 (GVEF…LVEQ) and 440–590 (RIDH…VYTE). Mg(2+) is bound by residues His443, His521, and Glu599.

This sequence belongs to the bacterial two-domain DSD family. As to quaternary structure, homodimer. Co(2+) serves as cofactor. It depends on Ni(2+) as a cofactor. Requires Mg(2+) as cofactor. The cofactor is Mn(2+).

The enzyme catalyses 3-dehydroshikimate = 3,4-dihydroxybenzoate + H2O. Its pathway is aromatic compound metabolism; 3,4-dihydroxybenzoate biosynthesis. Functionally, catalyzes the conversion of 3-dehydroshikimate to protocatechuate (3,4-dihydroxybenzoate), a common intermediate of quinate and shikimate degradation pathways. The sequence is that of 3-dehydroshikimate dehydratase from Pseudomonas putida (strain ATCC 47054 / DSM 6125 / CFBP 8728 / NCIMB 11950 / KT2440).